The following is a 466-amino-acid chain: Asparagine--tRNA ligase (466 aa).

The protein belongs to the class-II aminoacyl-tRNA synthetase family. Homodimer.

The protein resides in the cytoplasm. It catalyses the reaction tRNA(Asn) + L-asparagine + ATP = L-asparaginyl-tRNA(Asn) + AMP + diphosphate + H(+). The polypeptide is Asparagine--tRNA ligase (Colwellia psychrerythraea (strain 34H / ATCC BAA-681) (Vibrio psychroerythus)).